A 149-amino-acid chain; its full sequence is Ribonuclease pancreatic (149 aa).

An N-terminal signal peptide occupies residues 1-25 (MGLEKSLILFPLFVLLLGWVQPSLG). Residues 30–49 (AQKFERQHMDSSGSSNNSPT) form a disordered region. Substrate contacts are provided by lysine 32 and arginine 35. The Proton acceptor role is filled by histidine 37. The segment covering 39 to 49 (DSSGSSNNSPT) has biased composition (polar residues). 4 cysteine pairs are disulfide-bonded: cysteine 51/cysteine 109, cysteine 65/cysteine 120, cysteine 83/cysteine 135, and cysteine 90/cysteine 97. 66 to 70 (KPVNT) provides a ligand contact to substrate. An N-linked (GlcNAc...) asparagine glycan is attached at asparagine 87. Lysine 91 contacts substrate. Histidine 144 serves as the catalytic Proton donor.

The protein belongs to the pancreatic ribonuclease family. As to quaternary structure, monomer. Interacts with and forms tight 1:1 complexes with RNH1. Dimerization of two such complexes may occur. Interaction with RNH1 inhibits this protein. Pancreas.

It is found in the secreted. The enzyme catalyses an [RNA] containing cytidine + H2O = an [RNA]-3'-cytidine-3'-phosphate + a 5'-hydroxy-ribonucleotide-3'-[RNA].. It catalyses the reaction an [RNA] containing uridine + H2O = an [RNA]-3'-uridine-3'-phosphate + a 5'-hydroxy-ribonucleotide-3'-[RNA].. Endonuclease that catalyzes the cleavage of RNA on the 3' side of pyrimidine nucleotides. Acts on single-stranded and double-stranded RNA. The chain is Ribonuclease pancreatic (Rnase1) from Mus pahari (Gairdner's shrew-mouse).